The following is a 175-amino-acid chain: MGRTLENKQKIVTEIKSLLDDSEMAVVLDYKGLTIKEMSDLRSRLQTTNGICKVTKNSLMRKAIDGDSNWNDLESLLTGTNAFVLIKEDVGGAVKAIQSFQKDTKKSETKGALFEGRLLSDSEIKEIASLPSKEVLMAKIAGALNGVATKIAISINEVPSGLARSLKQHSEKSES.

This sequence belongs to the universal ribosomal protein uL10 family. Part of the ribosomal stalk of the 50S ribosomal subunit. The N-terminus interacts with L11 and the large rRNA to form the base of the stalk. The C-terminus forms an elongated spine to which L12 dimers bind in a sequential fashion forming a multimeric L10(L12)X complex.

Functionally, forms part of the ribosomal stalk, playing a central role in the interaction of the ribosome with GTP-bound translation factors. This is Large ribosomal subunit protein uL10 from Prochlorococcus marinus (strain AS9601).